The chain runs to 124 residues: MVTINQLVRHPRSMKVAKSNVPALEGCPQKRGVCTRVYTTTPKKPNSALRKVCRVRLTNGFEVTSYIGGEGHNLQEHSVILIRGGRVKDLPGVRYHTLRGTLDCSGVKDRKKGRSKYGVKKQKV.

At aspartate 89 the chain carries 3-methylthioaspartic acid.

This sequence belongs to the universal ribosomal protein uS12 family. Part of the 30S ribosomal subunit. Contacts proteins S8 and S17. May interact with IF1 in the 30S initiation complex.

Functionally, with S4 and S5 plays an important role in translational accuracy. In terms of biological role, interacts with and stabilizes bases of the 16S rRNA that are involved in tRNA selection in the A site and with the mRNA backbone. Located at the interface of the 30S and 50S subunits, it traverses the body of the 30S subunit contacting proteins on the other side and probably holding the rRNA structure together. The combined cluster of proteins S8, S12 and S17 appears to hold together the shoulder and platform of the 30S subunit. The polypeptide is Small ribosomal subunit protein uS12 (Baumannia cicadellinicola subsp. Homalodisca coagulata).